The following is a 376-amino-acid chain: Alcohol dehydrogenase class-3 (376 aa).

Residues C40, H62, C92, C95, C98, C106, and C170 each coordinate Zn(2+).

Belongs to the zinc-containing alcohol dehydrogenase family. Class-III subfamily. In terms of assembly, homodimer. The cofactor is Zn(2+).

The protein resides in the cytoplasm. It carries out the reaction a primary alcohol + NAD(+) = an aldehyde + NADH + H(+). It catalyses the reaction a secondary alcohol + NAD(+) = a ketone + NADH + H(+). The catalysed reaction is S-(hydroxymethyl)glutathione + NADP(+) = S-formylglutathione + NADPH + H(+). The enzyme catalyses S-(hydroxymethyl)glutathione + NAD(+) = S-formylglutathione + NADH + H(+). Functionally, oxidizes long-chain aliphatic alcohols, long-chain hydroxylated fatty acids and S-hydroxymethylglutathione (hmGSH) in increasing order of preference. Shows little or no activity with short-chain aliphatic alcohols. The protein is Alcohol dehydrogenase class-3 (adhI) of Cereibacter sphaeroides (strain ATCC 17023 / DSM 158 / JCM 6121 / CCUG 31486 / LMG 2827 / NBRC 12203 / NCIMB 8253 / ATH 2.4.1.) (Rhodobacter sphaeroides).